We begin with the raw amino-acid sequence, 490 residues long: ATP synthase subunit beta, chloroplastic (490 aa).

170 to 177 (GGXGVGKT) is a binding site for ATP.

Belongs to the ATPase alpha/beta chains family. As to quaternary structure, F-type ATPases have 2 components, CF(1) - the catalytic core - and CF(0) - the membrane proton channel. CF(1) has five subunits: alpha(3), beta(3), gamma(1), delta(1), epsilon(1). CF(0) has four main subunits: a(1), b(1), b'(1) and c(9-12).

The protein resides in the plastid. It is found in the chloroplast thylakoid membrane. The enzyme catalyses ATP + H2O + 4 H(+)(in) = ADP + phosphate + 5 H(+)(out). Its function is as follows. Produces ATP from ADP in the presence of a proton gradient across the membrane. The catalytic sites are hosted primarily by the beta subunits. This is ATP synthase subunit beta, chloroplastic from Ipomoea coccinea (Scarlet morning-glory).